Consider the following 287-residue polypeptide: MQIFGKILGAFFGFLFGGVFGALFGLFIGHQFDKARRLSQAGFKTAGFGQGPSQAQRQEEFFKSAFAVMGHVAKAKGQVTKEEIQLASAMMDRMSLHGEQRRAAQDAFREGKERDFPLEQLLERVKIATSGRFDLLQFFLELQISAAFADGDVHPSERNVLHKIARGLGFSSEQLERRLQMQEAAFRFQRQGGFGGQQHQSHHSSSHGGWQQASQTDRLADAYKILGIDANADGKEVKRAYRKLMNEHHPDKLMAKGLPPEMMNMAKEKSQEIQSAYDLIKKEKGFK.

The Periplasmic segment spans residues 1-6 (MQIFGK). Residues 7–30 (ILGAFFGFLFGGVFGALFGLFIGH) traverse the membrane as a helical segment. Residues 31–287 (QFDKARRLSQ…DLIKKEKGFK (257 aa)) are Cytoplasmic-facing. The tract at residues 192–213 (GGFGGQQHQSHHSSSHGGWQQA) is disordered. One can recognise a J domain in the interval 221 to 287 (DAYKILGIDA…DLIKKEKGFK (67 aa)).

In terms of assembly, homodimer.

The protein resides in the cell inner membrane. Regulatory DnaK co-chaperone. Direct interaction between DnaK and DjlA is needed for the induction of the wcaABCDE operon, involved in the synthesis of a colanic acid polysaccharide capsule, possibly through activation of the RcsB/RcsC phosphotransfer signaling pathway. The colanic acid capsule may help the bacterium survive conditions outside the host. This Vibrio vulnificus (strain YJ016) protein is Co-chaperone protein DjlA.